We begin with the raw amino-acid sequence, 336 residues long: Glycerol-3-phosphate dehydrogenase [NAD(P)+] (336 aa).

Residues Ser11, Trp12, Arg32, Arg33, and Lys110 each coordinate NADPH. Sn-glycerol 3-phosphate is bound by residues Lys110 and Gly140. Residue Ala144 participates in NADPH binding. Sn-glycerol 3-phosphate is bound by residues Lys195, Asp248, Ser258, Arg259, and Asn260. Lys195 (proton acceptor) is an active-site residue. NADPH is bound at residue Arg259. 2 residues coordinate NADPH: Val284 and Glu286.

Belongs to the NAD-dependent glycerol-3-phosphate dehydrogenase family.

It localises to the cytoplasm. It catalyses the reaction sn-glycerol 3-phosphate + NAD(+) = dihydroxyacetone phosphate + NADH + H(+). The catalysed reaction is sn-glycerol 3-phosphate + NADP(+) = dihydroxyacetone phosphate + NADPH + H(+). It functions in the pathway membrane lipid metabolism; glycerophospholipid metabolism. Catalyzes the reduction of the glycolytic intermediate dihydroxyacetone phosphate (DHAP) to sn-glycerol 3-phosphate (G3P), the key precursor for phospholipid synthesis. The chain is Glycerol-3-phosphate dehydrogenase [NAD(P)+] from Nocardia farcinica (strain IFM 10152).